The primary structure comprises 517 residues: MIGKAFIILSLLNELPTPTAAQAAQGGALGKDVWLPLAKFTATAAKIPGRAAKLLQDRSAQIVNLMKLQVQADICLNKAASEVSALGWQALAVAIAADIGSLQSLQQQRSEEAIAAAAAAEFARGHAAEFFKVAAAVQSAANSGCLTTNNKGGAAGSVINGFSTLGTAEQPAIGATSTAHVGDDITAITTTGFSDLAATDGIRTDSLTADTNCVLFKGGSDGPLTTANFGQSIPFAGGYLTRNPTANTASSADGTDFVSNPEDSKIAGIKVYRDAHAAAAKIRTAATFGSTFTDFKKLDQAKKSVHLRAAVKNIILGKPDGSVDDLSGEIDTKINQVFGEDQETFHSRFWDQLTKVKVEKAASGQEETTLDAITSFAALSRARTYYSTKVIKGLRDKISSLEIKNSKTEVKVTDADCNKHQSKDKCAAPCKWNENTTDINKKCSLDPVKATEQQAAQTAGAGEGAAGTTTDKCKDKKKDDCKSPDCKWEGETCKDSSILLNKQFALMVSAAFVALLF.

The first 21 residues, 1–21, serve as a signal peptide directing secretion; it reads MIGKAFIILSLLNELPTPTAA. Cystine bridges form between Cys417-Cys430 and Cys426-Cys443. The N-linked (GlcNAc...) asparagine glycan is linked to Asn435. Positions 454–470 are enriched in low complexity; sequence QAAQTAGAGEGAAGTTT. Positions 454 to 487 are disordered; it reads QAAQTAGAGEGAAGTTTDKCKDKKKDDCKSPDCK. Basic and acidic residues predominate over residues 471 to 487; sequence DKCKDKKKDDCKSPDCK. A lipid anchor (GPI-anchor amidated aspartate) is attached at Asp495. A propeptide spans 496 to 517 (removed in mature form); it reads SSILLNKQFALMVSAAFVALLF.

The protein resides in the cell membrane. In terms of biological role, VSG forms a coat on the surface of the parasite. The trypanosome evades the immune response of the host by expressing a series of antigenically distinct VSGs from an estimated 1000 VSG genes. This Trypanosoma brucei rhodesiense protein is Variant surface glycoprotein MVAT5.